We begin with the raw amino-acid sequence, 277 residues long: Pantothenate synthetase (277 aa).

26–33 (MGNLHEGH) is an ATP binding site. The active-site Proton donor is the histidine 33. Glutamine 57 contacts (R)-pantoate. Glutamine 57 contributes to the beta-alanine binding site. 144–147 (GKKD) serves as a coordination point for ATP. A (R)-pantoate-binding site is contributed by glutamine 150. Residues glycine 173 and 181-184 (LSSR) each bind ATP.

Belongs to the pantothenate synthetase family. As to quaternary structure, homodimer.

It localises to the cytoplasm. It carries out the reaction (R)-pantoate + beta-alanine + ATP = (R)-pantothenate + AMP + diphosphate + H(+). It functions in the pathway cofactor biosynthesis; (R)-pantothenate biosynthesis; (R)-pantothenate from (R)-pantoate and beta-alanine: step 1/1. Its function is as follows. Catalyzes the condensation of pantoate with beta-alanine in an ATP-dependent reaction via a pantoyl-adenylate intermediate. The protein is Pantothenate synthetase of Laribacter hongkongensis (strain HLHK9).